A 247-amino-acid polypeptide reads, in one-letter code: Probable proteasome subunit alpha type-5 (247 aa).

A Phosphothreonine modification is found at Thr-55.

The protein belongs to the peptidase T1A family. The 26S proteasome consists of a 20S proteasome core and two 19S regulatory subunits. The 20S proteasome core is composed of 28 subunits that are arranged in four stacked rings, resulting in a barrel-shaped structure. The two end rings are each formed by seven alpha subunits, and the two central rings are each formed by seven beta subunits. The catalytic chamber with the active sites is on the inside of the barrel.

It is found in the cytoplasm. The protein resides in the nucleus. The proteasome is a multicatalytic proteinase complex which is characterized by its ability to cleave peptides with Arg, Phe, Tyr, Leu, and Glu adjacent to the leaving group at neutral or slightly basic pH. The proteasome has an ATP-dependent proteolytic activity. In Schizosaccharomyces pombe (strain 972 / ATCC 24843) (Fission yeast), this protein is Probable proteasome subunit alpha type-5 (pup2).